The following is a 92-amino-acid chain: Co-chaperonin GroES (92 aa).

It belongs to the GroES chaperonin family. Heptamer of 7 subunits arranged in a ring. Interacts with the chaperonin GroEL.

The protein resides in the cytoplasm. Its function is as follows. Together with the chaperonin GroEL, plays an essential role in assisting protein folding. The GroEL-GroES system forms a nano-cage that allows encapsulation of the non-native substrate proteins and provides a physical environment optimized to promote and accelerate protein folding. GroES binds to the apical surface of the GroEL ring, thereby capping the opening of the GroEL channel. The chain is Co-chaperonin GroES from Thermotoga neapolitana.